The sequence spans 194 residues: Naphthalene 1,2-dioxygenase system, small oxygenase component (194 aa).

This sequence belongs to the bacterial ring-hydroxylating dioxygenase beta subunit family. The naphthalene dioxygenase (NDO) multicomponent enzyme system is composed of an electron transfer component and a dioxygenase component (iron sulfur protein (ISP)). The electron transfer component is composed of a ferredoxin reductase (NdoR) and a ferredoxin (NdoA), and the dioxygenase component is formed of a heterohexamer (trimer of heterodimers) of three large alpha subunits (NdoB) and three small beta subunits (NdoC).

It participates in aromatic compound metabolism; naphthalene degradation. Its function is as follows. Component of the naphthalene dioxygenase (NDO) multicomponent enzyme system which catalyzes the incorporation of both atoms of molecular oxygen into naphthalene to form cis-(1R,2S)-dihydroxy-1,2-dihydronaphthalene. The beta subunit seems to have a structural role in the holoenzyme. Also able to catalyze the cis-dihydroxylation of biphenyl and phenanthrene. The chain is Naphthalene 1,2-dioxygenase system, small oxygenase component from Pseudomonas putida (Arthrobacter siderocapsulatus).